The primary structure comprises 186 residues: dCTP deaminase (186 aa).

107–112 (KSTYAR) serves as a coordination point for dCTP. Glu-133 functions as the Proton donor/acceptor in the catalytic mechanism. 3 residues coordinate dCTP: Gln-152, Tyr-166, and Gln-176.

This sequence belongs to the dCTP deaminase family. As to quaternary structure, homotrimer.

The enzyme catalyses dCTP + H2O + H(+) = dUTP + NH4(+). The protein operates within pyrimidine metabolism; dUMP biosynthesis; dUMP from dCTP (dUTP route): step 1/2. Its function is as follows. Catalyzes the deamination of dCTP to dUTP. In Campylobacter jejuni (strain RM1221), this protein is dCTP deaminase.